Reading from the N-terminus, the 388-residue chain is Probable aspartic-type endopeptidase MCYG_06955 (388 aa).

Residues 1–21 form the signal peptide; that stretch reads MMGPFFYFTAYVSLLFAFTQA. N-linked (GlcNAc...) asparagine glycans are attached at residues Asn-82 and Asn-104. The region spanning 96–384 is the Peptidase A1 domain; it reads FVNEITVGND…DYDGPKIGFA (289 aa). The active site involves Asp-112. 2 N-linked (GlcNAc...) asparagine glycosylation sites follow: Asn-209 and Asn-261. Asp-278 is a catalytic residue. N-linked (GlcNAc...) asparagine glycosylation is found at Asn-315 and Asn-320.

It belongs to the peptidase A1 family.

Its subcellular location is the secreted. In terms of biological role, probable aspartic-type endopeptidase which contributes to virulence. This is Probable aspartic-type endopeptidase MCYG_06955 from Arthroderma otae (strain ATCC MYA-4605 / CBS 113480) (Microsporum canis).